The chain runs to 106 residues: AQEFVNSKIQPGKVVVFIKPTCPYCRKTQEILSQLPFKQGLLEFVDITATSDMSEIQDYLQQLTGARTVPRVFLGKDCIGGCSDLIAMQEKGELLARLKEMGALRQ.

The residue at position 1 (Ala-1) is an N-acetylalanine. In terms of domain architecture, Glutaredoxin spans 2 to 105 (QEFVNSKIQP…ARLKEMGALR (104 aa)). Lys-8 is subject to N6-succinyllysine. 2 disulfides stabilise this stretch: Cys-22-Cys-25 and Cys-78-Cys-82.

It belongs to the glutaredoxin family.

It is found in the cytoplasm. Has a glutathione-disulfide oxidoreductase activity in the presence of NADPH and glutathione reductase. Reduces low molecular weight disulfides and proteins. In Oryctolagus cuniculus (Rabbit), this protein is Glutaredoxin-1 (GLRX).